The primary structure comprises 577 residues: Beta-fructofuranosidase, insoluble isoenzyme 1 (577 aa).

A signal peptide spans 1-22 (MGTRLLALAPWLLLLLLQLAGA). Aspartate 63 is an active-site residue. 3 N-linked (GlcNAc...) asparagine glycosylation sites follow: asparagine 158, asparagine 183, and asparagine 333.

Belongs to the glycosyl hydrolase 32 family. Expressed in roots, leaves and flowers. Weakly expressed in seeds.

The protein resides in the secreted. It localises to the extracellular space. Its subcellular location is the apoplast. It is found in the cell wall. The enzyme catalyses Hydrolysis of terminal non-reducing beta-D-fructofuranoside residues in beta-D-fructofuranosides.. In terms of biological role, may play a role in sucrose partitioning during seed development and in stress response. The sequence is that of Beta-fructofuranosidase, insoluble isoenzyme 1 (CIN1) from Oryza sativa subsp. japonica (Rice).